We begin with the raw amino-acid sequence, 421 residues long: 4-aminobutyrate aminotransferase PuuE (421 aa).

Residues 110 to 111 and 238 to 241 each bind pyridoxal 5'-phosphate; these read GA and DEVQ. N6-(pyridoxal phosphate)lysine is present on Lys267. A pyridoxal 5'-phosphate-binding site is contributed by Thr296.

This sequence belongs to the class-III pyridoxal-phosphate-dependent aminotransferase family. Pyridoxal 5'-phosphate is required as a cofactor.

The enzyme catalyses 4-aminobutanoate + 2-oxoglutarate = succinate semialdehyde + L-glutamate. It functions in the pathway amine and polyamine degradation; putrescine degradation; succinate semialdehyde from 4-aminobutanoate. With respect to regulation, completely inhibited by succinate and low-aeration conditions. Functionally, catalyzes the transfer of the amino group from gamma-aminobutyrate (GABA) to alpha-ketoglutarate (KG) to yield succinic semialdehyde (SSA). PuuE is important for utilization of putrescine as the sole nitrogen or carbon source. In Escherichia coli (strain K12), this protein is 4-aminobutyrate aminotransferase PuuE (puuE).